The primary structure comprises 1323 residues: PAS domain-containing serine/threonine-protein kinase (1323 aa).

Met-1 bears the N-acetylmethionine mark. Ser-19 is subject to Phosphoserine. Residues 20-47 are disordered; the sequence is LPLPVSAEGPAAQTTAEPSRSFSSAHRH. Positions 31–43 are enriched in polar residues; sequence AQTTAEPSRSFSS. Position 34 is a phosphothreonine (Thr-34). PAS domains lie at 119-190 and 335-402; these read SSPL…MEAD and YRAS…SLQL. Residue Ser-582 is modified to Phosphoserine. The interval 837–857 is disordered; the sequence is AASDRESPGHVPSTLDAGPED. Ser-939 is subject to Phosphoserine. Positions 999–1251 constitute a Protein kinase domain; sequence YSTMSPLGSG…LEKLVTDPWV (253 aa). Residues 1005-1013, Lys-1028, and 1082-1089 contribute to the ATP site; these read LGSGAFGFV and EKHGSGLD. Catalysis depends on Asp-1128, which acts as the Proton acceptor. Asp-1146 is an ATP binding site. A phosphothreonine; by autocatalysis mark is found at Thr-1161 and Thr-1165. The interval 1298 to 1323 is disordered; the sequence is CGGPVPGEAPNGQGCLHPGDPRLLTS.

The protein belongs to the protein kinase superfamily. CAMK Ser/Thr protein kinase family. In terms of processing, autophosphorylated on Thr-1161 and Thr-1165. Autophosphorylation is activated by phospholipids. In terms of tissue distribution, ubiquitously expressed, with slightly higher expression in brain, prostate and testis. Reduced expression was found in placenta. Present in germ cells of testis and in the midpiece of sperm tails (at protein level).

Its subcellular location is the cytoplasm. The protein resides in the nucleus. It carries out the reaction L-seryl-[protein] + ATP = O-phospho-L-seryl-[protein] + ADP + H(+). It catalyses the reaction L-threonyl-[protein] + ATP = O-phospho-L-threonyl-[protein] + ADP + H(+). With respect to regulation, protein kinase activity is inhibited by the first PAS domain: binding of an unidentified ligand desinhibits the protein kinase activity. May be activated by autophosphorylation on Thr-1161 and Thr-1165. The activating role of autophosphorylation at Thr-1161 is unclear: according to a report, autophosphorylation at Thr-1161 does not play a major role in activation. Autophosphorylation is enhanced upon phosphatidylinositol monophosphate (phosphatidylinositol 4-phosphate) binding and inhibited upon phosphatidylinositol bi- and tri-phosphate binding. In contrast, phosphorylation of target proteins is inhibited upon all phosphatidylinositol-binding (phosphatidylinositol mono- bi- and tri-phosphate). Functionally, serine/threonine-protein kinase involved in energy homeostasis and protein translation. Phosphorylates EEF1A1, GYS1, PDX1 and RPS6. Probably plays a role under changing environmental conditions (oxygen, glucose, nutrition), rather than under standard conditions. Acts as a sensor involved in energy homeostasis: regulates glycogen synthase synthesis by mediating phosphorylation of GYS1, leading to GYS1 inactivation. May be involved in glucose-stimulated insulin production in pancreas and regulation of glucagon secretion by glucose in alpha cells; however such data require additional evidences. May play a role in regulation of protein translation by phosphorylating EEF1A1, leading to increase translation efficiency. May also participate in respiratory regulation. This chain is PAS domain-containing serine/threonine-protein kinase (PASK), found in Homo sapiens (Human).